A 511-amino-acid chain; its full sequence is Cytochrome P450 76C4 (511 aa).

A helical transmembrane segment spans residues 3 to 23 (IISGQALFLLFCFISSCFLIS). A heme-binding site is contributed by Cys-450.

The protein belongs to the cytochrome P450 family. It depends on heme as a cofactor.

It is found in the membrane. In Arabidopsis thaliana (Mouse-ear cress), this protein is Cytochrome P450 76C4 (CYP76C4).